We begin with the raw amino-acid sequence, 198 residues long: Protein GrpE (198 aa).

The tract at residues 1 to 58 (MTEKDQSVNNEEFAEKEDNTAKDSNTDEQIEKTASEDDVQNDSSAVDDKEKEIQQLKE) is disordered. Composition is skewed to basic and acidic residues over residues 16–35 (KEDN…KTAS) and 46–58 (VDDK…QLKE).

This sequence belongs to the GrpE family. Homodimer.

The protein localises to the cytoplasm. Functionally, participates actively in the response to hyperosmotic and heat shock by preventing the aggregation of stress-denatured proteins, in association with DnaK and GrpE. It is the nucleotide exchange factor for DnaK and may function as a thermosensor. Unfolded proteins bind initially to DnaJ; upon interaction with the DnaJ-bound protein, DnaK hydrolyzes its bound ATP, resulting in the formation of a stable complex. GrpE releases ADP from DnaK; ATP binding to DnaK triggers the release of the substrate protein, thus completing the reaction cycle. Several rounds of ATP-dependent interactions between DnaJ, DnaK and GrpE are required for fully efficient folding. The polypeptide is Protein GrpE (Staphylococcus carnosus (strain TM300)).